A 248-amino-acid chain; its full sequence is tRNA1(Val) (adenine(37)-N6)-methyltransferase (248 aa).

Belongs to the methyltransferase superfamily. tRNA (adenine-N(6)-)-methyltransferase family.

The protein localises to the cytoplasm. It catalyses the reaction adenosine(37) in tRNA1(Val) + S-adenosyl-L-methionine = N(6)-methyladenosine(37) in tRNA1(Val) + S-adenosyl-L-homocysteine + H(+). Functionally, specifically methylates the adenine in position 37 of tRNA(1)(Val) (anticodon cmo5UAC). This is tRNA1(Val) (adenine(37)-N6)-methyltransferase from Pectobacterium carotovorum subsp. carotovorum (strain PC1).